Reading from the N-terminus, the 296-residue chain is Elongation factor Ts (296 aa).

Positions 82–85 are involved in Mg(2+) ion dislocation from EF-Tu; it reads TDFV.

The protein belongs to the EF-Ts family.

Its subcellular location is the cytoplasm. Functionally, associates with the EF-Tu.GDP complex and induces the exchange of GDP to GTP. It remains bound to the aminoacyl-tRNA.EF-Tu.GTP complex up to the GTP hydrolysis stage on the ribosome. In Coxiella burnetii (strain CbuG_Q212) (Coxiella burnetii (strain Q212)), this protein is Elongation factor Ts.